A 433-amino-acid chain; its full sequence is Pyrimidine-nucleoside phosphorylase (433 aa).

81–83 (KHS) is a binding site for phosphate. K(+)-binding residues include Gly88 and Thr90. Phosphate contacts are provided by residues Thr92, 108–110 (KMS), and Thr120. Arg168 and Lys187 together coordinate substrate. K(+) contacts are provided by Leu243, Ala246, and Glu255.

The protein belongs to the thymidine/pyrimidine-nucleoside phosphorylase family. In terms of assembly, homodimer. Requires K(+) as cofactor.

It catalyses the reaction uridine + phosphate = alpha-D-ribose 1-phosphate + uracil. The catalysed reaction is thymidine + phosphate = 2-deoxy-alpha-D-ribose 1-phosphate + thymine. The enzyme catalyses 2'-deoxyuridine + phosphate = 2-deoxy-alpha-D-ribose 1-phosphate + uracil. Catalyzes phosphorolysis of the pyrimidine nucleosides uridine, thymidine and 2'-deoxyuridine with the formation of the corresponding pyrimidine base and ribose-1-phosphate. The chain is Pyrimidine-nucleoside phosphorylase (pdp) from Staphylococcus epidermidis (strain ATCC 35984 / DSM 28319 / BCRC 17069 / CCUG 31568 / BM 3577 / RP62A).